A 61-amino-acid polypeptide reads, in one-letter code: Large ribosomal subunit protein uL29 (61 aa).

This sequence belongs to the universal ribosomal protein uL29 family.

In Campylobacter jejuni subsp. jejuni serotype O:6 (strain 81116 / NCTC 11828), this protein is Large ribosomal subunit protein uL29.